We begin with the raw amino-acid sequence, 164 residues long: MPTRNMPLTKNPVESPDHEQELVLTVQYVADKTDIPNRRLFRKWVKAALSKPAEVVIRIVDRQEGEILNRDFRGKSSATNVLTFVYDDDVPLLGDIVLCAPVICNEAQQQGKDLTAHYAHLTIHGILHLQGYDHIRDEDAVVMESLETEIITRLGYPDPYVIQH.

Residues H124, H128, and H134 each coordinate Zn(2+).

The protein belongs to the endoribonuclease YbeY family. The cofactor is Zn(2+).

It is found in the cytoplasm. In terms of biological role, single strand-specific metallo-endoribonuclease involved in late-stage 70S ribosome quality control and in maturation of the 3' terminus of the 16S rRNA. The polypeptide is Endoribonuclease YbeY (Nitrosomonas europaea (strain ATCC 19718 / CIP 103999 / KCTC 2705 / NBRC 14298)).